The chain runs to 997 residues: Translation initiation factor IF-2 (997 aa).

The interval 101–406 (ELAAEQAAAR…SRNQHQDRRH (306 aa)) is disordered. 2 stretches are compositionally biased toward low complexity: residues 116-185 (AEAV…QAEP) and 195-209 (AAPAQAVAEPVEPAK). Positions 231–242 (TELTSQTPTPVA) are enriched in polar residues. Residues 256–280 (AEPAAAPKTTAKPGEIRRAAAPAAP) are compositionally biased toward low complexity. A compositionally biased stretch (basic and acidic residues) spans 281–292 (DRAREEARRAAE). Residues 385 to 394 (RAGGKGGRGG) show a composition bias toward gly residues. The tr-type G domain occupies 498-665 (PRAPVVTVMG…NVLLQAEILE (168 aa)). A G1 region spans residues 507–514 (GHVDHGKT). 507–514 (GHVDHGKT) contacts GTP. Residues 532-536 (GITQH) are G2. The tract at residues 553-556 (DTPG) is G3. Residues 553–557 (DTPGH) and 607–610 (NKID) each bind GTP. Residues 607–610 (NKID) form a G4 region. The tract at residues 643–645 (SAK) is G5.

The protein belongs to the TRAFAC class translation factor GTPase superfamily. Classic translation factor GTPase family. IF-2 subfamily.

Its subcellular location is the cytoplasm. One of the essential components for the initiation of protein synthesis. Protects formylmethionyl-tRNA from spontaneous hydrolysis and promotes its binding to the 30S ribosomal subunits. Also involved in the hydrolysis of GTP during the formation of the 70S ribosomal complex. The chain is Translation initiation factor IF-2 from Bordetella pertussis (strain Tohama I / ATCC BAA-589 / NCTC 13251).